The primary structure comprises 233 residues: 7-cyano-7-deazaguanine synthase (233 aa).

17–27 serves as a coordination point for ATP; sequence LSGGLDSMVCA. The Zn(2+) site is built by Cys196, Cys206, Cys209, and Cys212.

It belongs to the QueC family. It depends on Zn(2+) as a cofactor.

The enzyme catalyses 7-carboxy-7-deazaguanine + NH4(+) + ATP = 7-cyano-7-deazaguanine + ADP + phosphate + H2O + H(+). It participates in purine metabolism; 7-cyano-7-deazaguanine biosynthesis. Its function is as follows. Catalyzes the ATP-dependent conversion of 7-carboxy-7-deazaguanine (CDG) to 7-cyano-7-deazaguanine (preQ(0)). This Novosphingobium aromaticivorans (strain ATCC 700278 / DSM 12444 / CCUG 56034 / CIP 105152 / NBRC 16084 / F199) protein is 7-cyano-7-deazaguanine synthase.